A 359-amino-acid chain; its full sequence is Alanine racemase, biosynthetic (359 aa).

The active-site Proton acceptor; specific for D-alanine is Lys34. Lys34 bears the N6-(pyridoxal phosphate)lysine mark. Lys122 is subject to N6-carboxylysine. A substrate-binding site is contributed by Arg129. Tyr255 functions as the Proton acceptor; specific for L-alanine in the catalytic mechanism. Met303 contacts substrate.

Belongs to the alanine racemase family. As to quaternary structure, homodimer. Requires pyridoxal 5'-phosphate as cofactor.

The enzyme catalyses L-alanine = D-alanine. The protein operates within amino-acid biosynthesis; D-alanine biosynthesis; D-alanine from L-alanine: step 1/1. It participates in cell wall biogenesis; peptidoglycan biosynthesis. In terms of biological role, catalyzes the interconversion of L-alanine and D-alanine. Provides the D-alanine required for cell wall biosynthesis. The polypeptide is Alanine racemase, biosynthetic (Escherichia coli (strain K12)).